Reading from the N-terminus, the 379-residue chain is dTDP-3-amino-3,4,6-trideoxy-alpha-D-glucose transaminase (379 aa).

Pyridoxal 5'-phosphate-binding positions include Gly-67, Gln-167, 188–193, Tyr-221, Tyr-227, 235–237, and Tyr-318; these read SFYPGK and NSR. Lys-193 is modified (N6-(pyridoxal phosphate)lysine).

This sequence belongs to the degT/dnrJ/eryC1 family. In terms of assembly, homodimer. Requires pyridoxal 5'-phosphate as cofactor.

It carries out the reaction dTDP-3-amino-3,4,6-trideoxy-alpha-D-glucose + 2-oxoglutarate = dTDP-3-dehydro-4,6-dideoxy-alpha-D-glucose + L-glutamate. Its pathway is antibiotic biosynthesis. Involved in the biosynthesis of dTDP-alpha-D-desosamine, a sugar found in several bacterial macrolide antibiotics. Catalyzes the reversible transfer of the amino group from L-glutamate to the C-3 position of dTDP-3-keto-4,6-deoxyglucose to yield dTDP-3-amino-3,4,6-trideoxyglucose. This chain is dTDP-3-amino-3,4,6-trideoxy-alpha-D-glucose transaminase, found in Streptomyces venezuelae.